The following is a 178-amino-acid chain: Stage V sporulation protein T (178 aa).

The 47-residue stretch at 5-51 (GIVRRIDDLGRVVIPKEIRRTLRIREGDPLEIFVDRDGEVILKKYSP) folds into the SpoVT-AbrB domain. The interval 56–178 (GDFAKEYADA…AGFLARQMEQ (123 aa)) is GAF-like.

To B.subtilis AbrB and Abh. As to quaternary structure, homotetramer. Two monomers dimerize via their N-terminal swapped-hairpin domains. These dimers further associate into tetramers through helical interactions between their C-terminal GAF-like domains.

In terms of biological role, transcriptional factor that positively regulates or negatively the expression of a large number of forespore-specific sigma G-dependent genes. May provide a mechanism of feedback control that is important for forespore development. SpoVT levels during spore formation have a major impact on the germination and the resistance of the resultant spores. The sequence is that of Stage V sporulation protein T from Bacillus subtilis (strain 168).